A 511-amino-acid chain; its full sequence is Phospho-2-dehydro-3-deoxyheptonate aldolase 2, chloroplastic (511 aa).

Belongs to the class-II DAHP synthase family. In terms of tissue distribution, leaves, stems, tuber and roots.

The protein localises to the plastid. The protein resides in the chloroplast. It catalyses the reaction D-erythrose 4-phosphate + phosphoenolpyruvate + H2O = 7-phospho-2-dehydro-3-deoxy-D-arabino-heptonate + phosphate. Its pathway is metabolic intermediate biosynthesis; chorismate biosynthesis; chorismate from D-erythrose 4-phosphate and phosphoenolpyruvate: step 1/7. In Solanum tuberosum (Potato), this protein is Phospho-2-dehydro-3-deoxyheptonate aldolase 2, chloroplastic (SHKB).